A 433-amino-acid chain; its full sequence is Glutamate-1-semialdehyde 2,1-aminomutase (433 aa).

Lys265 carries the N6-(pyridoxal phosphate)lysine modification.

The protein belongs to the class-III pyridoxal-phosphate-dependent aminotransferase family. HemL subfamily. As to quaternary structure, homodimer. Pyridoxal 5'-phosphate serves as cofactor.

It localises to the cytoplasm. The catalysed reaction is (S)-4-amino-5-oxopentanoate = 5-aminolevulinate. Its pathway is porphyrin-containing compound metabolism; protoporphyrin-IX biosynthesis; 5-aminolevulinate from L-glutamyl-tRNA(Glu): step 2/2. The polypeptide is Glutamate-1-semialdehyde 2,1-aminomutase (Shewanella denitrificans (strain OS217 / ATCC BAA-1090 / DSM 15013)).